A 448-amino-acid polypeptide reads, in one-letter code: Beta-alanine--pyruvate aminotransferase (448 aa).

Trp-61 serves as a coordination point for substrate. Position 120 to 121 (120 to 121) interacts with pyridoxal 5'-phosphate; that stretch reads GS. Residue Lys-288 is modified to N6-(pyridoxal phosphate)lysine. Thr-327 serves as a coordination point for pyridoxal 5'-phosphate. The substrate site is built by Arg-414 and Gln-421.

This sequence belongs to the class-III pyridoxal-phosphate-dependent aminotransferase family. Homotetramer. Pyridoxal 5'-phosphate is required as a cofactor.

The enzyme catalyses 3-oxopropanoate + L-alanine = beta-alanine + pyruvate. Its activity is regulated as follows. Inhibited by gabaculine (5-amino-1,3-cyclohexadienylcarboxylic acid). In terms of biological role, involved in the degradation of beta-alanine. Catalyzes the transfer of the amino group from beta-alanine to pyruvate to yield L-alanine and 3-oxopropanoate. It can also accept both 4-aminobutyrate and (S)-alpha-methylbenzylamine (MBA) as amino-group donors in the presence of pyruvate as an amine acceptor. The polypeptide is Beta-alanine--pyruvate aminotransferase (bauA) (Pseudomonas aeruginosa (strain ATCC 15692 / DSM 22644 / CIP 104116 / JCM 14847 / LMG 12228 / 1C / PRS 101 / PAO1)).